A 137-amino-acid chain; its full sequence is Small ribosomal subunit protein eS17 (137 aa).

The protein belongs to the eukaryotic ribosomal protein eS17 family. As to quaternary structure, component of the small ribosomal subunit. Mature ribosomes consist of a small (40S) and a large (60S) subunit. The 40S subunit contains about 32 different proteins and 1 molecule of RNA (18S). The 60S subunit contains 45 different proteins and 3 molecules of RNA (25S, 5.8S and 5S).

Its subcellular location is the cytoplasm. Functionally, component of the ribosome, a large ribonucleoprotein complex responsible for the synthesis of proteins in the cell. The small ribosomal subunit (SSU) binds messenger RNAs (mRNAs) and translates the encoded message by selecting cognate aminoacyl-transfer RNA (tRNA) molecules. The large subunit (LSU) contains the ribosomal catalytic site termed the peptidyl transferase center (PTC), which catalyzes the formation of peptide bonds, thereby polymerizing the amino acids delivered by tRNAs into a polypeptide chain. The nascent polypeptides leave the ribosome through a tunnel in the LSU and interact with protein factors that function in enzymatic processing, targeting, and the membrane insertion of nascent chains at the exit of the ribosomal tunnel. This Candida albicans (strain SC5314 / ATCC MYA-2876) (Yeast) protein is Small ribosomal subunit protein eS17 (RPS17B).